The chain runs to 1079 residues: Electrogenic sodium bicarbonate cotransporter 1 (1079 aa).

The segment at 1–62 is required for interaction with AHCYL1; the sequence is MEDEAVLDRG…EKKEKERISE (62 aa). Topologically, residues 1-466 are cytoplasmic; sequence MEDEAVLDRG…FASDFYDALN (466 aa). The residue at position 2 (Glu2) is a Phosphoserine. Tyr30 carries the phosphotyrosine modification. Residues 39–52 are compositionally biased toward basic residues; it reads YRRRRRHKRKAGHK. A disordered region spans residues 39–78; that stretch reads YRRRRRHKRKAGHKEKKEKERISENYSDKSDVENADESSS. The segment covering 53–70 has biased composition (basic and acidic residues); sequence EKKEKERISENYSDKSDV. 7 positions are modified to phosphoserine: Ser61, Ser65, Ser68, Ser223, Ser232, Ser233, and Ser245. Positions 235 to 266 are disordered; it reads SRMFSNPDNGSPAMTHRNLTSSSLNDISDKPE. A phosphothreonine mark is found at Thr249 and Thr254. Polar residues predominate over residues 251 to 260; the sequence is RNLTSSSLND. Phosphoserine is present on residues Ser256, Ser257, and Ser262. Residues 467–491 traverse the membrane as a helical segment; that stretch reads IQALSAILFIYLATVTNAITFGGLL. Topologically, residues 492–501 are extracellular; that stretch reads GDATDNMQGV. A helical membrane pass occupies residues 502-520; the sequence is LESFLGTAVSGAIFCLFAG. Position 521 (Gln521) is a topological domain, cytoplasmic. The chain crosses the membrane as a discontinuously helical span at residues 522-542; that stretch reads PLTILSSTGPVLVFERLLFNF. The Extracellular segment spans residues 543-550; the sequence is SKDHSFDY. A helical membrane pass occupies residues 551–571; that stretch reads LEFRLWIGLWSAFMCLILVAT. Residues 572-585 lie on the Cytoplasmic side of the membrane; that stretch reads DASFLVQYFTRFTE. The chain crosses the membrane as a helical span at residues 586–609; the sequence is EGFSSLISFIFIYDAFKKMIKLAD. N-linked (GlcNAc) asparagine glycosylation is found at Ile597 and Phe617. At 610–692 the chain is on the extracellular side; sequence YYPINSDFRV…GNNCDFVPDI (83 aa). Residues 693-710 traverse the membrane as a helical segment; sequence TLMSFILFLGTYTSSMAM. Over 711-725 the chain is Cytoplasmic; the sequence is KKFKTSRYFPTTARK. Residues 726–745 form a helical membrane-spanning segment; sequence LISDFAIILSILIFCVIDAL. The Extracellular segment spans residues 746–779; the sequence is VGVDTPKLIVPSEFKPTSPHRGWFVPPFGGNPWW. The tract at residues 748–779 is interaction with CA4; that stretch reads VDTPKLIVPSEFKPTSPHRGWFVPPFGGNPWW. Residues 780–807 traverse the membrane as a helical segment; it reads VCLAAAIPALLVTILIFMDQQITAVIVN. Topologically, residues 808–819 are cytoplasmic; that stretch reads RKEHKLKKGAGY. The helical transmembrane segment at 820–836 threads the bilayer; sequence HLDLFWVAILMVVCSFM. Ala837 is a topological domain (extracellular). The discontinuously helical transmembrane segment at 838–855 threads the bilayer; sequence LPWYVAATVISIAHIDSL. Over 856–877 the chain is Cytoplasmic; the sequence is KMETETSAPGEQPKFLGVREQR. The chain crosses the membrane as a helical span at residues 878–894; it reads VTGTLVFILTGLSVFMA. The Extracellular portion of the chain corresponds to 895-901; the sequence is PILKFIP. Residues 902 to 918 form a helical membrane-spanning segment; sequence MPVLYGVFLYMGVASLN. Topologically, residues 919-960 are cytoplasmic; that stretch reads GVQFMDRLKLLLMPLKHQPDFIYLRHVPLRRVHLFTSLQVLC. Positions 961–986 form an intramembrane region, discontinuously helical; the sequence is LALLWILKSTVAAIIFPVMILALVAV. The Cytoplasmic portion of the chain corresponds to 987-1079; that stretch reads RKGMDYLFSQ…STFLERHTSC (93 aa). Residues 1002–1004 are CA2-binding; the sequence is LDD. A disordered region spans residues 1012-1079; the sequence is KKKEDEKKKK…STFLERHTSC (68 aa). A phosphoserine mark is found at Ser1026 and Ser1029. Position 1026 is a phosphoserine; by PKA (Ser1026). Residues 1030 to 1033 are CA2-binding; that stretch reads DNDD. Phosphoserine is present on residues Ser1034 and Ser1044. Residues 1057–1059 are required for basolateral targeting; the sequence is FLS. Asp1060, Leu1064, Ser1069, and Ser1078 each carry phosphoserine. Positions 1062-1079 are enriched in basic and acidic residues; sequence KPLDRERSSTFLERHTSC.

It belongs to the anion exchanger (TC 2.A.31) family. In terms of assembly, homodimer. Interacts with CA2/carbonic anhydrase 2 and CA4/carbonic anhydrase 4 which may regulate transporter activity. Isoform 1 but not isoform 2 interacts with AHCYL1 (via PEST domain when phosphorylated); the interaction increases SLC4A4 isoform 1 activity. Interacts with AHCYL2. Phosphorylation of Ser-1026 by PKA increases the binding of CA2 and changes the Na(+):HCO3(-) stoichiometry of the transporter from 3:1 to 2:1. Phosphorylated in presence of STK39 and dephosphorylated in presence of PP1 phosphatase; phosphorylation seems to inhibit SLC4A4 activity. In terms of processing, N-glycosylation is not necessary for the transporter basic functions. In terms of tissue distribution, specifically expressed in kidney and to a lower extent in liver, lung, spleen, brain, skeletal muscle and heart. In kidney, expressed in proximal tubules at the corticomedullary junction. Isoform 2 is specifically expressed in kidney. Isoform 1 is expressed in kidney and pancreas while isoform 3 is specifically expressed in brain (at protein level). In brain, isoform 1 is expressed in astrocytes while isoform 3 is expressed in neurons (at protein level). In the eye, isoform 1 is expressed in cornea, conjunctiva, lens epithelium, ciliary bodies and retina while isoform 2 is detected only in the conjunctiva.

The protein resides in the basolateral cell membrane. Its subcellular location is the cell membrane. It catalyses the reaction 2 hydrogencarbonate(out) + Na(+)(out) = 2 hydrogencarbonate(in) + Na(+)(in). The enzyme catalyses 3 hydrogencarbonate(out) + Na(+)(out) = 3 hydrogencarbonate(in) + Na(+)(in). Its activity is regulated as follows. Inhibited by 4,4'-diisothiocyanatostilbene-2,2'-disulfonic acid (DIDS). Its function is as follows. Electrogenic sodium/bicarbonate cotransporter with a Na(+):HCO3(-) stoichiometry varying from 1:2 to 1:3. May regulate bicarbonate influx/efflux at the basolateral membrane of cells and regulate intracellular pH. This chain is Electrogenic sodium bicarbonate cotransporter 1 (Slc4a4), found in Rattus norvegicus (Rat).